Consider the following 1393-residue polypeptide: DNA-directed RNA polymerase subunit beta (1393 aa).

This sequence belongs to the RNA polymerase beta chain family. In terms of assembly, the RNAP catalytic core consists of 2 alpha, 1 beta, 1 beta' and 1 omega subunit. When a sigma factor is associated with the core the holoenzyme is formed, which can initiate transcription.

It catalyses the reaction RNA(n) + a ribonucleoside 5'-triphosphate = RNA(n+1) + diphosphate. Its function is as follows. DNA-dependent RNA polymerase catalyzes the transcription of DNA into RNA using the four ribonucleoside triphosphates as substrates. The polypeptide is DNA-directed RNA polymerase subunit beta (Rhodospirillum rubrum (strain ATCC 11170 / ATH 1.1.1 / DSM 467 / LMG 4362 / NCIMB 8255 / S1)).